Reading from the N-terminus, the 110-residue chain is Insulin-2 (110 aa).

Residues 1–24 (MALWIRFLPLLALLILWEPRPAQA) form the signal peptide. 3 disulfides stabilise this stretch: Cys-31–Cys-96, Cys-43–Cys-109, and Cys-95–Cys-100. Positions 57–87 (EVEDPQVAQLELGGGPGAGDLQTLALEVARQ) are cleaved as a propeptide — c peptide.

Belongs to the insulin family. As to quaternary structure, heterodimer of a B chain and an A chain linked by two disulfide bonds.

The protein resides in the secreted. Insulin decreases blood glucose concentration. It increases cell permeability to monosaccharides, amino acids and fatty acids. It accelerates glycolysis, the pentose phosphate cycle, and glycogen synthesis in liver. The sequence is that of Insulin-2 (Ins2) from Rattus norvegicus (Rat).